A 971-amino-acid polypeptide reads, in one-letter code: Isoleucine--tRNA ligase (971 aa).

The short motif at 60–70 is the 'HIGH' region element; that stretch reads PYANGDLHIGH. Glutamate 563 contacts L-isoleucyl-5'-AMP. Residues 604–608 carry the 'KMSKS' region motif; that stretch reads KMSKS. An ATP-binding site is contributed by lysine 607. 4 residues coordinate Zn(2+): cysteine 922, cysteine 925, cysteine 942, and cysteine 945.

The protein belongs to the class-I aminoacyl-tRNA synthetase family. IleS type 1 subfamily. In terms of assembly, monomer. The cofactor is Zn(2+).

It localises to the cytoplasm. It carries out the reaction tRNA(Ile) + L-isoleucine + ATP = L-isoleucyl-tRNA(Ile) + AMP + diphosphate. In terms of biological role, catalyzes the attachment of isoleucine to tRNA(Ile). As IleRS can inadvertently accommodate and process structurally similar amino acids such as valine, to avoid such errors it has two additional distinct tRNA(Ile)-dependent editing activities. One activity is designated as 'pretransfer' editing and involves the hydrolysis of activated Val-AMP. The other activity is designated 'posttransfer' editing and involves deacylation of mischarged Val-tRNA(Ile). The chain is Isoleucine--tRNA ligase from Acaryochloris marina (strain MBIC 11017).